Here is a 798-residue protein sequence, read N- to C-terminus: Protocadherin beta-14 (798 aa).

Positions 1 to 26 (MEIRGALDLRKRQVLIFLVLLGLSRA) are cleaved as a signal peptide. Over 27–686 (GTESAHYSVA…APAQAQADSL (660 aa)) the chain is Extracellular. Cadherin domains are found at residues 35–133 (VAEE…SPTF), 138–242 (ILIK…APEF), 247–347 (YEVQ…PPEV), 352–451 (ITKR…APTF), and 456–561 (YTLF…SPFV). Cysteine 96 and cysteine 102 are joined by a disulfide. The N-linked (GlcNAc...) asparagine glycan is linked to asparagine 169. N-linked (GlcNAc...) asparagine glycosylation is found at asparagine 359, asparagine 418, asparagine 436, asparagine 487, and asparagine 567. The 104-residue stretch at 568–671 (GSAPCTELVP…LVDGFSQPYL (104 aa)) folds into the Cadherin 6 domain. Residues 687–711 (TVYLVVALASVSSLFLFSVLLFVAV) form a helical membrane-spanning segment. Over 712 to 798 (RLCRRSRAAS…FRNSFGLNIQ (87 aa)) the chain is Cytoplasmic.

The protein localises to the cell membrane. Functionally, potential calcium-dependent cell-adhesion protein. May be involved in the establishment and maintenance of specific neuronal connections in the brain. In Homo sapiens (Human), this protein is Protocadherin beta-14 (PCDHB14).